A 666-amino-acid chain; its full sequence is DNA mismatch repair protein MutL (666 aa).

It belongs to the DNA mismatch repair MutL/HexB family.

This protein is involved in the repair of mismatches in DNA. It is required for dam-dependent methyl-directed DNA mismatch repair. May act as a 'molecular matchmaker', a protein that promotes the formation of a stable complex between two or more DNA-binding proteins in an ATP-dependent manner without itself being part of a final effector complex. This chain is DNA mismatch repair protein MutL, found in Clostridium botulinum (strain Kyoto / Type A2).